Reading from the N-terminus, the 581-residue chain is MAFCISYVGALLPCSLSTRTKFAICHNTSKLHRAAYKTSRWNIPGDVGSTPPPSKLHQALCLNEHSLSCMAELPMDYEGKIKETRHLLHLKGENDPIESLIFVDATLRLGVNHHFQKEIEEILRKSYATMKSPIICEYHTLHEVSLFFRLMRQHGRYVSADVFNNFKGESGRFKEELKRDTRGLVELYEAAQLSFEGERILDEAENFSRQILHGNLAGMEDNLRRSVGNKLRYPFHTSIARFTGRNYDDDLGGMYEWGKTLRELALMDLQVERSVYQEELLQVSKWWNELGLYKKLNLARNRPFEFYTWSMVILADYINLSEQRVELTKSVAFIYLIDDIFDVYGTLDELIIFTEAVNKWDYSATDTLPENMKMCCMTLLDTINGTSQKIYEKHGYNPIDSLKTTWKSLCSAFLVEAKWSASGSLPSANEYLENEKVSSGVYVVLVHLFCLMGLGGTSRGSIELNDTQELMSSIAIIFRLWNDLGSAKNEHQNGKDGSYLNCYKKEHINLTAAQAHEHALELVAIEWKRLNKESFNLNHDSVSSFKQAALNLARMVPLMYSYDHNQRGPVLEEYVKFMLSD.

A chloroplast-targeting transit peptide spans 1–68 (MAFCISYVGA…ALCLNEHSLS (68 aa)). N27, N206, and N319 each carry an N-linked (GlcNAc...) asparagine glycan. Mg(2+) contacts are provided by D338 and D342. Positions 338 to 342 (DDIFD) match the DDXXD motif motif. N-linked (GlcNAc...) asparagine glycans are attached at residues N384 and N465. Mg(2+) contacts are provided by N482, S486, and E490. Residue N509 is glycosylated (N-linked (GlcNAc...) asparagine).

Belongs to the terpene synthase family. Tpsg subfamily. Requires Mg(2+) as cofactor. The cofactor is Mn(2+). Accumulates in flowers; mostly expressed in both upper and lower petal lobes, and, to a lower extent, in tube and stamens.

It is found in the plastid. The protein resides in the chloroplast stroma. It carries out the reaction (2E)-geranyl diphosphate = tricyclene + diphosphate. It catalyses the reaction (2E)-geranyl diphosphate = beta-myrcene + diphosphate. The protein operates within secondary metabolite biosynthesis; terpenoid biosynthesis. Its function is as follows. Contributes to floral scent emission. The chain is Tricyclene synthase Oc15, chloroplastic (Oc15) from Antirrhinum majus (Garden snapdragon).